Consider the following 1740-residue polypeptide: MDGPGASAVVVRVGIPDLQQTKCLRLDPTAPVWAAKQRVLCALNHSLQDALNYGLFQPPSRGRAGKFLDEERLLQDYPPNLDTPLPYLEFRYKRRVYAQNLIDDKQFAKLHTKANLKKFMDYVQLHSTDKVARLLDKGLDPNFHDPDSGECPLSLAAQLDNATDLLKVLRNGGAHLDFRTRDGLTAVHCATRQRNAGALTTLLDLGASPDYKDSRGLTPLYHSALGGGDALCCELLLHDHAQLGTTDENGWQEIHQACRFGHVQHLEHLLFYGANMGAQNASGNTALHICALYNQESCARVLLFRGANKDVRNYNSQTAFQVAIIAGNFELAEVIKTHKDSDVVPFRETPSYAKRRRLAGPSGLASPRPLQRSASDINLKGDQPAASPGPTLRSLPHQLLLQRLQEEKDRDRDGEQENDISGPSAGRGGHSKISPSGPGGSGPAPGPGPASPAPPAPPPRGPKRKLYSAVPGRKFIAVKAHSPQGEGEIPLHRGEAVKVLSIGEGGFWEGTVKGRTGWFPADCVEEVQMRQYDTRHETREDRTKRLFRHYTVGSYDSLTSHSDYVIDDKVAILQKRDHEGFGFVLRGAKAETPIEEFTPTPAFPALQYLESVDVEGVAWKAGLRTGDFLIEVNGVNVVKVGHKQVVGLIRQGGNRLVMKVVSVTRKPEEDSARRRAPPPPKRAPSTTLTLRSKSMTAELEELASIRRRKGEKLDEILAVAAEPTLRPDIADADSRAATVKQRPTSRRITPAEISSLFERQGLPGPEKLPGSLRKGIPRTKSVGEDEKLASLLEGRFPRSTSMQDTVREGRGIPPPPQTAPPPPPAPYYFDSGPPPTFSPPPPPPGRAYDTVRSSFKPGLEARLGAGAAGLYDSGTPLGPLPYPERQKRARSMIILQDSAPEVGDVPRPAPAATPPERPKRRPRPSGPDSPYANLGAFSASLFAPSKPQRRKSPLVKQLQVEDAQERAALAVGSPGPVGGSFAREPSPTHRGPRPGGLDYSSGEGLGLTFGGPSPGPVKERRLEERRRSTVFLSVGAIEGSPPSADLPSLQPSRSIDERLLGTGATTGRDLLLPSPVSALKPLVGGPSLGPSGSTFIHPLTGKPLDPSSPLALALAARERALASQTPSRSPTPVHSPDADRPGPLFVDVQTRDSERGPLASPAFSPRSPAWIPVPARREAEKPTREERKSPEDKKSMILSVLDTSLQRPAGLIVVHATSNGQEPNRLGAEEERPGTPELAPTPMQAAAVAEPMPSPRAQPPGSIPADPGPGQGSSEEEPELVFAVNLPPAQLSSSDEETREELARIGLVPPPEEFANGILLATPPPGPGPLPTTVPSPASGKPSSELPPAPESAADSGVEEADTRSSSDPHLETTSTISTVSSMSTLSSESGELTDTHTSFADGHTFLLEKPPVPPKPKLKSPLGKGPVTFRDPLLKQSSDSELMAQQHHATSTGLTSAAGPARPRYLFQRRSKLWGDPVESRGLPGPEDDKPTVISELSSRLQQLNKDTRSLGEEPVGGLGSLLDPAKKSPIAAARCAVVPSAGWLFSSLGELSTISAQRSPGGPGGGASYSVRPSGRYPVARRAPSPVKPASLERVEGLGAGVGGAGRPFGLTPPTILKSSSLSIPHEPKEVRFVVRSVSARSRSPSPSPLPSPSPGSGPSAGPRRPFQQKPLQLWSKFDVGDWLESIHLGEHRDRFEDHEIEGAHLPALTKEDFVELGVTRVGHRMNIERALRQLDGS.

The segment at 1-75 is intramolecular interaction with the ANK repeats; that stretch reads MDGPGASAVV…KFLDEERLLQ (75 aa). At Tyr-122 the chain carries Phosphotyrosine. ANK repeat units lie at residues 148 to 181, 182 to 214, 215 to 245, 249 to 278, 282 to 311, and 315 to 345; these read SGEC…FRTR, DGLT…YKDS, RGLT…QLGT, NGWQ…NMGA, SGNT…NKDV, and NSQT…DVVP. Residues 354–466 form a disordered region; sequence KRRRLAGPSG…PPPRGPKRKL (113 aa). A phosphoserine mark is found at Ser-373, Ser-375, Ser-387, and Ser-394. Positions 404–415 are enriched in basic and acidic residues; sequence LQEEKDRDRDGE. Pro residues predominate over residues 444–460; the sequence is APGPGPASPAPPAPPPR. The 60-residue stretch at 470–529 folds into the SH3 domain; the sequence is VPGRKFIAVKAHSPQGEGEIPLHRGEAVKVLSIGEGGFWEGTVKGRTGWFPADCVEEVQM. Ser-482 carries the post-translational modification Phosphoserine. A Phosphotyrosine modification is found at Tyr-555. The PDZ domain occupies 570–664; that stretch reads VAILQKRDHE…RLVMKVVSVT (95 aa). The interval 664-687 is disordered; that stretch reads TRKPEEDSARRRAPPPPKRAPSTT. Residues 677 to 684 form a required for interaction with ABI1 region; the sequence is PPPPKRAP. 4 positions are modified to phosphoserine: Ser-694, Ser-781, Ser-790, and Ser-801. Disordered stretches follow at residues 759–855, 868–1053, 1115–1199, 1211–1463, and 1476–1518; these read RQGL…RSSF, AGLY…QPSR, AARE…MILS, LIVV…GPAR, and GDPV…EPVG. Positions 812–845 are enriched in pro residues; the sequence is IPPPPQTAPPPPPAPYYFDSGPPPTFSPPPPPPG. A phosphoserine mark is found at Ser-891 and Ser-898. Thr-913 carries the post-translational modification Phosphothreonine. Residue Tyr-931 is modified to Phosphotyrosine. The residue at position 966 (Arg-966) is an Asymmetric dimethylarginine. The span at 1017–1027 shows a compositional bias: basic and acidic residues; sequence VKERRLEERRR. Residues 1123 to 1132 are compositionally biased toward polar residues; it reads SQTPSRSPTP. Thr-1131 is subject to Phosphothreonine. Phosphoserine occurs at positions 1135, 1160, 1164, and 1167. Residues 1175–1195 are compositionally biased toward basic and acidic residues; sequence ARREAEKPTREERKSPEDKKS. Thr-1235 carries the phosphothreonine modification. Pro residues-rich tracts occupy residues 1252–1262 and 1322–1334; these read MPSPRAQPPGS and TPPP…PTTV. At Ser-1254 the chain carries Phosphoserine. The span at 1335-1344 shows a compositional bias: low complexity; the sequence is PSPASGKPSS. Residues 1361–1371 show a composition bias toward basic and acidic residues; that stretch reads ADTRSSSDPHL. The segment covering 1372–1393 has biased composition (low complexity); that stretch reads ETTSTISTVSSMSTLSSESGEL. An SH3-binding motif is present at residues 1411–1417; sequence PPVPPKP. Ser-1421 bears the Phosphoserine mark. A coiled-coil region spans residues 1495–1515; the sequence is ISELSSRLQQLNKDTRSLGEE. Positions 1496 to 1506 are enriched in polar residues; it reads SELSSRLQQLN. Phosphoserine occurs at positions 1511, 1522, 1530, and 1549. Disordered regions lie at residues 1556-1594 and 1637-1673; these read ISAQ…PASL and VRSV…QQKP. Residues 1637-1647 are compositionally biased toward low complexity; it reads VRSVSARSRSP. Phosphoserine occurs at positions 1644, 1646, and 1648. Pro residues predominate over residues 1648 to 1658; sequence SPSPLPSPSPG. Residues 1659-1668 are compositionally biased toward low complexity; it reads SGPSAGPRRP. The region spanning 1677-1740 is the SAM domain; it reads WSKFDVGDWL…ERALRQLDGS (64 aa).

Belongs to the SHANK family. May homomultimerize via its SAM domain. Interacts with BAIAP2, DBNL and SLC17A7/VGLUT1. Interacts with DLGAP1/GKAP, GRM1/MGLUR1, GRM5/MGLUR5 and LZTS3 C-termini via its PDZ domain. Interacts with ABI1, HOMER1, HOMER2, HOMER3 and CTTN/cortactin SH3 domain. Is part of a complex with DLG4/PSD-95 and DLGAP1/GKAP. Interacts (via PDZ domain) with the GRIA1 subunit of the AMPA receptor (via PDZ-binding motif). Interacts with WASF1 and CYFIP2; the interactions mediate the association of SHANK3 with the WAVE1 complex. Interacts with ARPC2; the interaction probably mediates the association of SHANK3 with the Arp2/3 complex. Interacts (via ANK repeats) with SHARPIN and SPTAN1. Interacts (via PDZ domain) with ARHGAP44 (probably via PDZ-binding motif); the interaction takes place in dendritic spines and promotes GRIA1 exocytosis. Interacts with CAMK2A. Interacts with DIP2A. Interacts with ADGRL3. In terms of tissue distribution, widely expressed in brain (at protein level).

It localises to the cytoplasm. The protein resides in the postsynaptic density. The protein localises to the cell projection. Its subcellular location is the dendritic spine. Major scaffold postsynaptic density protein which interacts with multiple proteins and complexes to orchestrate the dendritic spine and synapse formation, maturation and maintenance. Interconnects receptors of the postsynaptic membrane including NMDA-type and metabotropic glutamate receptors via complexes with GKAP/PSD-95 and HOMER, respectively, and the actin-based cytoskeleton. Plays a role in the structural and functional organization of the dendritic spine and synaptic junction through the interaction with Arp2/3 and WAVE1 complex as well as the promotion of the F-actin clusters. By way of this control of actin dynamics, participates in the regulation of developing neurons growth cone motility and the NMDA receptor-signaling. Also modulates GRIA1 exocytosis and GRM5/MGLUR5 expression and signaling to control the AMPA and metabotropic glutamate receptor-mediated synaptic transmission and plasticity. May be required at an early stage of synapse formation and be inhibited by IGF1 to promote synapse maturation. This is SH3 and multiple ankyrin repeat domains protein 3 (Shank3) from Rattus norvegicus (Rat).